Consider the following 1042-residue polypeptide: Glutamate dehydrogenase 2 (1042 aa).

Residue Lys-596 is part of the active site. Arg-763 is modified (ADP-ribosylarginine; by Legionella Lart1).

Belongs to the Glu/Leu/Phe/Val dehydrogenases family. As to quaternary structure, homodimer. In terms of processing, (Microbial infection) ADP-ribosylated at Arg-763 by the Legionella pneumophila effector Lart1, which inhibits the glutamate dehydrogenase activity. Amoeba are natural hosts of Legionella, and ADP-ribosylation by Lart1 may promote Legionella parasitism.

It localises to the cytoplasm. The enzyme catalyses L-glutamate + NAD(+) + H2O = 2-oxoglutarate + NH4(+) + NADH + H(+). With respect to regulation, activity is stimulated by AMP. Its activity is regulated as follows. (Microbial infection) Inhibited by ADP-ribosylation. The sequence is that of Glutamate dehydrogenase 2 (glud2) from Dictyostelium discoideum (Social amoeba).